The chain runs to 753 residues: Photosystem I P700 chlorophyll a apoprotein A1 (753 aa).

8 helical membrane-spanning segments follow: residues 73–96 (IFSAHFGQLAIIFIWLSGMYYHGA), 159–182 (LYCTAIGALIFAALMLFAGWFHYH), 198–222 (LNHHLAGLLGLGSLSWAGHQIHVSL), 294–312 (TAHHHLAIAVLFLIAGHMY), 349–372 (WHAQLAVNLAMLGSLTIVVAHHMY), 388–414 (LSLFTHHMWIGGFIIVGAAAHAAIFMV), 436–458 (AIVSHLNWVCIFLGFHSFGLYIH), and 534–552 (FLVHHIHAFTIHVTVLILL). Residues Cys-576 and Cys-585 each contribute to the [4Fe-4S] cluster site. 2 helical membrane passes run 592-613 (HVFLGLFWMYNAISVVIFHFSW) and 667-689 (LSAYGLLFLGAHFVWAFSLMFLF). Position 678 (His-678) interacts with chlorophyll a'. Chlorophyll a is bound by residues Met-686 and Tyr-694. Trp-695 lines the phylloquinone pocket. The helical transmembrane segment at 727–747 (AVGVAHYLLGGIVTTWAFFLA) threads the bilayer.

Belongs to the PsaA/PsaB family. The PsaA/B heterodimer binds the P700 chlorophyll special pair and subsequent electron acceptors. PSI consists of a core antenna complex that captures photons, and an electron transfer chain that converts photonic excitation into a charge separation. The eukaryotic PSI reaction center is composed of at least 11 subunits. P700 is a chlorophyll a/chlorophyll a' dimer, A0 is one or more chlorophyll a, A1 is one or both phylloquinones and FX is a shared 4Fe-4S iron-sulfur center. is required as a cofactor.

The protein localises to the plastid. It localises to the chloroplast thylakoid membrane. The catalysed reaction is reduced [plastocyanin] + hnu + oxidized [2Fe-2S]-[ferredoxin] = oxidized [plastocyanin] + reduced [2Fe-2S]-[ferredoxin]. In terms of biological role, psaA and PsaB bind P700, the primary electron donor of photosystem I (PSI), as well as the electron acceptors A0, A1 and FX. PSI is a plastocyanin-ferredoxin oxidoreductase, converting photonic excitation into a charge separation, which transfers an electron from the donor P700 chlorophyll pair to the spectroscopically characterized acceptors A0, A1, FX, FA and FB in turn. Oxidized P700 is reduced on the lumenal side of the thylakoid membrane by plastocyanin. This Pinus thunbergii (Japanese black pine) protein is Photosystem I P700 chlorophyll a apoprotein A1.